A 1120-amino-acid chain; its full sequence is Transcriptional repressor NF-X1 (1120 aa).

Positions 9 to 26 (GTFKFNTDAAEFIPQEKK) are interaction with PABPC1 and PABC4. The interval 22-295 (PQEKKNSGLN…LNERPAKSTC (274 aa)) is disordered. Phosphoserine is present on residues serine 50, serine 82, and serine 95. Polar residues predominate over residues 73 to 106 (YHPSGSKPKSQQTSFQSSPCNKSPKSHGLQNQPW). The segment covering 111-120 (NEKHHIRVKK) has biased composition (basic residues). Residues 124-141 (LAEQTSDTAGLESSTRSE) show a composition bias toward polar residues. Phosphoserine is present on residues serine 129 and serine 150. Basic and acidic residues-rich tracts occupy residues 142–159 (SGTDLREHSPSESEKEVV), 188–202 (LKCEWSNRTTPKPED), 222–254 (SSRKGVLDGYGARRNEQRRYPQKRPPWEVEGAR), and 282–291 (PKDDLNERPA). Serine 326 is subject to Phosphoserine. An RING-type; atypical zinc finger spans residues 358 to 409 (CMVCCELVRVTAPVWSCQSCYHVFHLNCIKKWARSPASQADGQSGWRCPACQ). 8 consecutive NF-X1-type zinc fingers follow at residues 453–471 (CPHSCNLLCHPGPCPPCPA), 506–525 (CGQHQCAELCHGGQCQPCQI), 567–586 (CGNHTCSQVCHPQPCQQCPR), 632–655 (CGSLDFIHTCEKLCHEGDCGPCSR), 694–713 (CGRHKCNEICCVDKEHKCPL), 721–740 (CGLHRCEEPCHRGNCQTCWQ), 832–854 (CGMHKCQRLCHKGECLVDEPCKQ), and 863–884 (CGHPCMAPCHTSSPCPVTACKA). The region spanning 994–1062 (LKFVSDVEKE…KRNVVVTAIR (69 aa)) is the R3H domain. The segment at 1081 to 1109 (QARPPPPIPHHRHQSDKNPGSSNLQKITK) is disordered. Residues 1097–1106 (KNPGSSNLQK) are compositionally biased toward polar residues.

The protein belongs to the NFX1 family. As to quaternary structure, isoform 1 interacts with PABPC1 and PABPC4. In terms of assembly, (Microbial infection) Isoform 1 and isoform 3 interact with human papillomavirus (HPV) type-16 E6 oncoprotein. In terms of processing, isoform 3 is polyubiquitinated in the presence of HPV16 E6 protein; which leads to proteasomal degradation. Isoform 1 is not polyubiquitinated.

It localises to the nucleus. Functionally, binds to the X-box motif of MHC class II genes and represses their expression. May play an important role in regulating the duration of an inflammatory response by limiting the period in which MHC class II molecules are induced by interferon-gamma. Isoform 3 binds to the X-box motif of TERT promoter and represses its expression. Together with PABPC1 or PABPC4, isoform 1 acts as a coactivator for TERT expression. Mediates E2-dependent ubiquitination. The chain is Transcriptional repressor NF-X1 (NFX1) from Homo sapiens (Human).